The following is a 215-amino-acid chain: Nitrate/nitrite response regulator protein NarP (215 aa).

Positions 8 to 124 constitute a Response regulatory domain; that stretch reads QVMIVDDHPL…VLLEAIRAGA (117 aa). Position 59 is a 4-aspartylphosphate (aspartate 59). Positions 147–212 constitute an HTH luxR-type domain; sequence EEDPFSVLTE…AATILFLQQR (66 aa). The H-T-H motif DNA-binding region spans 171 to 190; that stretch reads NKQIASVLNISEQTVKVHIR.

This protein activates the expression of the nitrate reductase (narGHJI) and formate dehydrogenase-N (fdnGHI) operons and represses the transcription of the fumarate reductase (frdABCD) operon in response to a nitrate/nitrite induction signal transmitted by either the NarX or NarQ proteins. The chain is Nitrate/nitrite response regulator protein NarP (narP) from Escherichia coli (strain K12).